Here is a 239-residue protein sequence, read N- to C-terminus: Alpha-acetolactate decarboxylase (239 aa).

It belongs to the alpha-acetolactate decarboxylase family.

The catalysed reaction is (2S)-2-acetolactate + H(+) = (R)-acetoin + CO2. Its pathway is polyol metabolism; (R,R)-butane-2,3-diol biosynthesis; (R,R)-butane-2,3-diol from pyruvate: step 2/3. Its activity is regulated as follows. The enzyme is active only in the presence of branched-chain amino acids. Valine results in much higher activation than leucine or isoleucine. Functionally, converts acetolactate into acetoin. Regulates leucine and valine biosynthesis by diverting the flux of alpha-acetolactate towards acetoin when the branched-chain amino acids are present in high concentration. The protein is Alpha-acetolactate decarboxylase (aldC) of Streptococcus thermophilus.